The primary structure comprises 328 residues: Putative GDP-L-fucose synthase 2 (328 aa).

Ala2 is modified (N-acetylalanine). Position 26–32 (26–32 (GHRGLVG)) interacts with NADP(+). The active-site Proton donor/acceptor is the Tyr152. NADP(+)-binding positions include Lys156, 179-182 (PTNL), and His195. Positions 203, 218, 225, and 285 each coordinate substrate.

The protein belongs to the NAD(P)-dependent epimerase/dehydratase family. Fucose synthase subfamily. In terms of assembly, homodimer.

It catalyses the reaction GDP-beta-L-fucose + NADP(+) = GDP-4-dehydro-alpha-D-rhamnose + NADPH + H(+). It participates in nucleotide-sugar biosynthesis; GDP-L-fucose biosynthesis via de novo pathway; GDP-L-fucose from GDP-alpha-D-mannose: step 2/2. Its function is as follows. Catalyzes the two-step NADP-dependent conversion of GDP-4-dehydro-6-deoxy-D-mannose to GDP-fucose, involving an epimerase and a reductase reaction. This is Putative GDP-L-fucose synthase 2 (GER2) from Arabidopsis thaliana (Mouse-ear cress).